The following is a 210-amino-acid chain: Chaperone protein TorD (210 aa).

This sequence belongs to the TorD/DmsD family. TorD subfamily.

It is found in the cytoplasm. In terms of biological role, involved in the biogenesis of TorA. Acts on TorA before the insertion of the molybdenum cofactor and, as a result, probably favors a conformation of the apoenzyme that is competent for acquiring the cofactor. The protein is Chaperone protein TorD of Salmonella paratyphi B (strain ATCC BAA-1250 / SPB7).